The sequence spans 219 residues: Flagellar biosynthetic protein FliZ (219 aa).

The first 26 residues, 1 to 26 (MKKSQYFIVFICFFVLFSVHPIAAAA), serve as a signal peptide directing secretion. Positions 41-61 (KDEKTADQSEQKKEKTTKTAD) are enriched in basic and acidic residues. The segment at 41-62 (KDEKTADQSEQKKEKTTKTADE) is disordered. A helical transmembrane segment spans residues 71 to 96 (VSAFDFVKMIFALLFVIVLIYGLVKL). The span at 200-212 (LEELKQNRSEGKK) shows a compositional bias: basic and acidic residues. Residues 200–219 (LEELKQNRSEGKKKGPRHHE) form a disordered region.

It is found in the cell membrane. May be a structural component of the flagellum that anchors the rod to the membrane. The chain is Flagellar biosynthetic protein FliZ (fliZ) from Bacillus subtilis (strain 168).